Consider the following 274-residue polypeptide: Copper chaperone for superoxide dismutase (274 aa).

Residues 11–74 (LCTLEFAVQM…LLEGTGRQAV (64 aa)) form the HMA domain. Residues Cys-22 and Cys-25 each contribute to the Cu cation site. Lys-76 is covalently cross-linked (Glycyl lysine isopeptide (Lys-Gly) (interchain with G-Cter in ubiquitin)). The tract at residues 88–234 (AAVAILGGPG…LACGIIARSA (147 aa)) is superoxide dismutase-like. A disulfide bridge connects residues Cys-141 and Cys-227. Zn(2+)-binding residues include His-147, His-155, His-164, and Asp-167. Glycyl lysine isopeptide (Lys-Gly) (interchain with G-Cter in ubiquitin) cross-links involve residues Lys-189, Lys-216, and Lys-241. Cu cation-binding residues include Cys-244 and Cys-246. At Ser-267 the chain carries Phosphoserine.

The protein in the C-terminal section; belongs to the Cu-Zn superoxide dismutase family. As to quaternary structure, homodimer, and heterodimer with SOD1. Interacts with COMMD1. Interacts with XIAP/BIRC4. Interacts with SLC31A1(via C-terminal domain); this interaction is Cu(1+)-mediated. The heterodimer CCS:SOD1 interacts with SLC31A1; this heterotrimer is Cu(1+)-mediated and its maintenance is regulated through SOD1 activation. Cu(2+) is required as a cofactor. Requires Zn(2+) as cofactor. Ubiquitinion by XIAP/BIRC4 leads to enhancement of its chaperone activity toward its physiologic target, SOD1, rather than proteasomal degradation. XIAP/BIRC4 preferentially ubiquitinates at Lys-241. Ubiquitous.

Its subcellular location is the cytoplasm. In terms of biological role, delivers copper to copper zinc superoxide dismutase (SOD1). The chain is Copper chaperone for superoxide dismutase from Homo sapiens (Human).